A 128-amino-acid polypeptide reads, in one-letter code: MKGYGWGIGSVVLVTVAQLILKWGMMNTPLMSLADINGQFVFNHLPQFIAVICGLAGYALSMLCWFFALRYLPLNRAYPLLSLSYALVYLGAVSLPWFSESATLLKTLGAGFILLGIWLINTKPIAKD.

At 1-5 (MKGYG) the chain is on the cytoplasmic side. The helical transmembrane segment at 6–26 (WGIGSVVLVTVAQLILKWGMM) threads the bilayer. At 27-47 (NTPLMSLADINGQFVFNHLPQ) the chain is on the periplasmic side. A helical membrane pass occupies residues 48 to 68 (FIAVICGLAGYALSMLCWFFA). Residues 69-77 (LRYLPLNRA) lie on the Cytoplasmic side of the membrane. Residues 78 to 98 (YPLLSLSYALVYLGAVSLPWF) traverse the membrane as a helical segment. The Periplasmic portion of the chain corresponds to 99–101 (SES). A helical transmembrane segment spans residues 102–122 (ATLLKTLGAGFILLGIWLINT). At 123–128 (KPIAKD) the chain is on the cytoplasmic side.

Belongs to the ArnF family. In terms of assembly, heterodimer of ArnE and ArnF.

It is found in the cell inner membrane. It functions in the pathway bacterial outer membrane biogenesis; lipopolysaccharide biosynthesis. Translocates 4-amino-4-deoxy-L-arabinose-phosphoundecaprenol (alpha-L-Ara4N-phosphoundecaprenol) from the cytoplasmic to the periplasmic side of the inner membrane. This is Probable 4-amino-4-deoxy-L-arabinose-phosphoundecaprenol flippase subunit ArnF from Yersinia enterocolitica serotype O:8 / biotype 1B (strain NCTC 13174 / 8081).